The chain runs to 151 residues: uncharacterized protein (151 aa).

4 consecutive transmembrane segments (helical) span residues 22 to 42 (IVSI…GFFF), 62 to 82 (ALFI…TKII), 97 to 117 (LFAF…ADYF), and 121 to 141 (IYIP…IELA).

Its subcellular location is the cell membrane. This is an uncharacterized protein from Bacillus subtilis (strain 168).